Reading from the N-terminus, the 249-residue chain is tRNA (guanine-N(1)-)-methyltransferase (249 aa).

Residues Gly113 and 133-138 (IGDYVL) contribute to the S-adenosyl-L-methionine site.

The protein belongs to the RNA methyltransferase TrmD family. Homodimer.

It localises to the cytoplasm. It catalyses the reaction guanosine(37) in tRNA + S-adenosyl-L-methionine = N(1)-methylguanosine(37) in tRNA + S-adenosyl-L-homocysteine + H(+). Functionally, specifically methylates guanosine-37 in various tRNAs. This Aeromonas salmonicida (strain A449) protein is tRNA (guanine-N(1)-)-methyltransferase.